Consider the following 76-residue polypeptide: MTIEELKSAISFGNSDLNIFTISENVVSFVSSSHKRKGVRGSCLYKARPAVSAARLRRLRSPCGILSSVSQTILSV.

This chain is Putative protein StbC (stbC), found in Escherichia coli.